The chain runs to 418 residues: Gamma-glutamyl phosphate reductase (418 aa).

This sequence belongs to the gamma-glutamyl phosphate reductase family.

It is found in the cytoplasm. It carries out the reaction L-glutamate 5-semialdehyde + phosphate + NADP(+) = L-glutamyl 5-phosphate + NADPH + H(+). The protein operates within amino-acid biosynthesis; L-proline biosynthesis; L-glutamate 5-semialdehyde from L-glutamate: step 2/2. In terms of biological role, catalyzes the NADPH-dependent reduction of L-glutamate 5-phosphate into L-glutamate 5-semialdehyde and phosphate. The product spontaneously undergoes cyclization to form 1-pyrroline-5-carboxylate. In Histophilus somni (strain 2336) (Haemophilus somnus), this protein is Gamma-glutamyl phosphate reductase.